A 97-amino-acid chain; its full sequence is Ferredoxin-like protein YdiT (97 aa).

This sequence belongs to the bacterial-type ferredoxin family. FixX subfamily.

Could be a 3Fe-4S cluster-containing protein. Probably participates in a redox process with YdiQ, YdiR and YdiS. The chain is Ferredoxin-like protein YdiT (ydiT) from Escherichia coli (strain K12).